Here is an 835-residue protein sequence, read N- to C-terminus: Microcephalin (835 aa).

The BRCT 1 domain maps to 1 to 93 (MAAPILKDVV…AHIDESLFPA (93 aa)). 4 positions are modified to phosphoserine: Ser-279, Ser-287, Ser-296, and Ser-333. Disordered stretches follow at residues 313-381 (PDQK…RRSI) and 419-443 (DNLK…AQLS). Thr-335 is subject to Phosphothreonine. Over residues 343–361 (LLIHSRPRSSSVKRKRVSH) the composition is skewed to basic residues. Residues 434-443 (QLPSSPAQLS) are compositionally biased toward polar residues. At Ser-548 the chain carries Phosphoserine. The segment at 555–584 (AVGLKSTQNKGTTSKISNSSEGEAQSEHEP) is disordered. A compositionally biased stretch (polar residues) spans 559–577 (KSTQNKGTTSKISNSSEGE). 2 BRCT domains span residues 640-730 (SGRG…PFEL) and 751-833 (YRGT…NYLL).

As to quaternary structure, interacts with CDC27 and maybe other components of the APC/C complex. Interacts with histone variant H2AX under DNA damage conditions. Expressed in fetal brain, liver and kidney.

The protein localises to the cytoplasm. It is found in the cytoskeleton. The protein resides in the microtubule organizing center. Its subcellular location is the centrosome. Implicated in chromosome condensation and DNA damage induced cellular responses. May play a role in neurogenesis and regulation of the size of the cerebral cortex. The sequence is that of Microcephalin from Homo sapiens (Human).